The sequence spans 303 residues: Putative S-adenosyl-L-methionine-dependent methyltransferase Mb1931c (303 aa).

Residues Asp129 and 158-159 (DL) each bind S-adenosyl-L-methionine.

This sequence belongs to the UPF0677 family.

Its function is as follows. Exhibits S-adenosyl-L-methionine-dependent methyltransferase activity. The chain is Putative S-adenosyl-L-methionine-dependent methyltransferase Mb1931c from Mycobacterium bovis (strain ATCC BAA-935 / AF2122/97).